The following is a 444-amino-acid chain: Phosphomethylpyrimidine synthase (444 aa).

Substrate is bound by residues N80, M109, Y138, H174, 194–196, 235–238, and E274; these read SRG and DSLR. Zn(2+) is bound at residue H278. Y301 lines the substrate pocket. Residue H342 participates in Zn(2+) binding. Residues C422, C425, and C430 each contribute to the [4Fe-4S] cluster site.

Belongs to the ThiC family. As to quaternary structure, homodimer. Requires [4Fe-4S] cluster as cofactor.

It catalyses the reaction 5-amino-1-(5-phospho-beta-D-ribosyl)imidazole + S-adenosyl-L-methionine = 4-amino-2-methyl-5-(phosphooxymethyl)pyrimidine + CO + 5'-deoxyadenosine + formate + L-methionine + 3 H(+). The protein operates within cofactor biosynthesis; thiamine diphosphate biosynthesis. Catalyzes the synthesis of the hydroxymethylpyrimidine phosphate (HMP-P) moiety of thiamine from aminoimidazole ribotide (AIR) in a radical S-adenosyl-L-methionine (SAM)-dependent reaction. This is Phosphomethylpyrimidine synthase from Nitratiruptor sp. (strain SB155-2).